Here is a 460-residue protein sequence, read N- to C-terminus: Sexual development regulator velC (460 aa).

3 disordered regions span residues 67–131, 152–216, and 422–460; these read VGPD…PQAP, YAPR…RPDP, and KKGN…SARQ. Over residues 192 to 207 the composition is skewed to polar residues; that stretch reads PVTTNGRPPDSNSPMV. Residues 239-422 form the Velvet domain; it reads LSDNRFNLQI…KEQGCIISIK (184 aa). Over residues 423–437 the composition is skewed to basic and acidic residues; the sequence is KGNDRSKNTRSHDDS. A compositionally biased stretch (basic residues) spans 451–460; it reads GKRRRRSARQ.

It belongs to the velvet family. VelC subfamily. As to quaternary structure, interacts with VE1.

The protein localises to the nucleus. Functionally, velvet-domain-containing protein that acts as a positive regulator of sexual development. Dispensable for regulation of conidial size, hyphal hydrophobicity, fumonisin production, and oxidant resistance. The polypeptide is Sexual development regulator velC (Gibberella moniliformis (strain M3125 / FGSC 7600) (Maize ear and stalk rot fungus)).